The chain runs to 612 residues: Threonine--tRNA ligase (612 aa).

Residues 218 to 509 (DHRKLGVELG…LSEHFGGNFP (292 aa)) are catalytic. Zn(2+)-binding residues include Cys-310, His-361, and His-486.

It belongs to the class-II aminoacyl-tRNA synthetase family. As to quaternary structure, homodimer. Zn(2+) serves as cofactor.

It localises to the cytoplasm. It carries out the reaction tRNA(Thr) + L-threonine + ATP = L-threonyl-tRNA(Thr) + AMP + diphosphate + H(+). Functionally, catalyzes the attachment of threonine to tRNA(Thr) in a two-step reaction: L-threonine is first activated by ATP to form Thr-AMP and then transferred to the acceptor end of tRNA(Thr). Also edits incorrectly charged L-seryl-tRNA(Thr). The protein is Threonine--tRNA ligase of Helicobacter pylori (strain P12).